Here is a 2869-residue protein sequence, read N- to C-terminus: uncharacterized protein (2869 aa).

The span at 1-10 (MNINRNNIND) shows a compositional bias: low complexity. 13 disordered regions span residues 1-132 (MNIN…SSNK), 171-349 (NNNN…DNYR), 380-485 (FNES…TSSS), 498-517 (KEKH…KPKK), 690-812 (NQNQ…NQNQ), 860-1074 (INNN…INSN), 1108-1175 (INNI…NSNS), 1188-1216 (SNSN…VDVD), 1224-1243 (VFIV…SVKT), 1340-1448 (ESNS…GNNI), 1476-1704 (IDNC…SNYY), 1731-1832 (NSNS…NEGF), and 2725-2773 (DRVR…NNNE). The span at 14 to 25 (HSTSFNDNFDSF) shows a compositional bias: polar residues. Low complexity-rich tracts occupy residues 26–124 (GNQN…NPKN), 171–348 (NNNN…YDNY), 388–414 (NNNT…LNNN), 421–446 (YYDN…QTNK), and 454–478 (KNNN…NSNN). Residues 505 to 514 (HENGDISESK) are compositionally biased toward basic and acidic residues. Low complexity-rich tracts occupy residues 690–707 (NQNQ…QNHQ) and 714–749 (PQRQ…NQDQ). Positions 750-763 (YQDHDHEHEHDHDQ) are enriched in basic and acidic residues. The segment covering 764 to 781 (NQNQNQNQHQSRNQNQDQ) has biased composition (low complexity). Positions 782-795 (YQDHDHEHEHDHDQ) are enriched in basic and acidic residues. Composition is skewed to low complexity over residues 796–812 (NQNQ…NQNQ), 860–891 (INNN…QSQN), 898–911 (DNRI…SSRD), 921–991 (CDFN…SFNN), and 1000–1074 (NNHN…INSN). Positions 1188–1212 (SNSNGFNNNNSNDQRNIDSSSNSDI) are enriched in low complexity. Residues 1230 to 1243 (TSSNKSNRASSVKT) show a composition bias toward polar residues. 2 stretches are compositionally biased toward low complexity: residues 1377-1448 (DNGN…GNNI) and 1476-1639 (IDNC…NDND). Positions 1640 to 1659 (IGNDFDNDNDNDSYIDDDNN) are enriched in acidic residues. 3 stretches are compositionally biased toward low complexity: residues 1660–1704 (VYDN…SNYY), 1731–1823 (NSNS…NNNS), and 2739–2754 (SSSG…SGGS). Positions 2758-2773 (NLDDSENESDSENNNE) are enriched in acidic residues.

This is an uncharacterized protein from Dictyostelium discoideum (Social amoeba).